Reading from the N-terminus, the 377-residue chain is 3-dehydroquinate synthase (377 aa).

NAD(+) is bound by residues 113–117 (GVIGD), 137–138 (TT), Lys-150, and Lys-159. Glu-192, His-254, and His-273 together coordinate Zn(2+).

The protein belongs to the sugar phosphate cyclases superfamily. Dehydroquinate synthase family. Co(2+) serves as cofactor. The cofactor is Zn(2+). Requires NAD(+) as cofactor.

The protein localises to the cytoplasm. The catalysed reaction is 7-phospho-2-dehydro-3-deoxy-D-arabino-heptonate = 3-dehydroquinate + phosphate. It participates in metabolic intermediate biosynthesis; chorismate biosynthesis; chorismate from D-erythrose 4-phosphate and phosphoenolpyruvate: step 2/7. In terms of biological role, catalyzes the conversion of 3-deoxy-D-arabino-heptulosonate 7-phosphate (DAHP) to dehydroquinate (DHQ). The sequence is that of 3-dehydroquinate synthase from Bartonella bacilliformis (strain ATCC 35685 / KC583 / Herrer 020/F12,63).